We begin with the raw amino-acid sequence, 339 residues long: DNA-directed RNA polymerase subunit alpha (339 aa).

Residues 1-233 (MVREEVAGST…DLFLPFLHAE (233 aa)) form an alpha N-terminal domain (alpha-NTD) region. The interval 264-339 (KKGIPLNCIF…IDLLKNKLSF (76 aa)) is alpha C-terminal domain (alpha-CTD).

Belongs to the RNA polymerase alpha chain family. In terms of assembly, in plastids the minimal PEP RNA polymerase catalytic core is composed of four subunits: alpha, beta, beta', and beta''. When a (nuclear-encoded) sigma factor is associated with the core the holoenzyme is formed, which can initiate transcription.

It is found in the plastid. The protein resides in the chloroplast. It carries out the reaction RNA(n) + a ribonucleoside 5'-triphosphate = RNA(n+1) + diphosphate. Functionally, DNA-dependent RNA polymerase catalyzes the transcription of DNA into RNA using the four ribonucleoside triphosphates as substrates. This is DNA-directed RNA polymerase subunit alpha from Festucopsis serpentini.